The chain runs to 66 residues: DNA-directed RNA polymerase subunit Rpo10 (66 aa).

Positions 7, 10, 44, and 45 each coordinate Zn(2+).

It belongs to the archaeal Rpo10/eukaryotic RPB10 RNA polymerase subunit family. In terms of assembly, part of the RNA polymerase complex. Requires Zn(2+) as cofactor.

It is found in the cytoplasm. The catalysed reaction is RNA(n) + a ribonucleoside 5'-triphosphate = RNA(n+1) + diphosphate. Functionally, DNA-dependent RNA polymerase (RNAP) catalyzes the transcription of DNA into RNA using the four ribonucleoside triphosphates as substrates. This Pyrobaculum islandicum (strain DSM 4184 / JCM 9189 / GEO3) protein is DNA-directed RNA polymerase subunit Rpo10.